The following is a 986-amino-acid chain: Zinc finger protein 445 (986 aa).

The SCAN box domain occupies 52–134 (RQLFRQLRYH…ALLEELQRDL (83 aa)). The KRAB domain maps to 219 to 289 (LTFQDVEVTF…NICTVQLKRD (71 aa)). Glycyl lysine isopeptide (Lys-Gly) (interchain with G-Cter in SUMO2) cross-links involve residues lysine 302, lysine 360, and lysine 385. Residues 433–460 (QNTGLKENGKDRYGETSRKSWHAHPEHR) are disordered. Basic and acidic residues predominate over residues 439–460 (ENGKDRYGETSRKSWHAHPEHR). 2 consecutive C2H2-type zinc fingers follow at residues 470–492 (FQCRVCGKAFKWRSNRIRHEKIH) and 498–520 (YQCSLCEKAFQRLSSYRLHQKTH). A Glycyl lysine isopeptide (Lys-Gly) (interchain with G-Cter in SUMO2) cross-link involves residue lysine 524. 2 consecutive C2H2-type zinc fingers follow at residues 553 to 575 (LHCNQCGKNFSCKSYAIEHQRIH) and 581 to 604 (YKCTRCRKTFRWKSNFSRHMKLHH). A Glycyl lysine isopeptide (Lys-Gly) (interchain with G-Cter in SUMO2) cross-link involves residue lysine 609. C2H2-type zinc fingers lie at residues 634–656 (FPCQNCGKTFTQKKSLIEHQRIH) and 662–686 (YQCSGCGETFTYRSSYIIHMKRTQH). Residue lysine 691 forms a Glycyl lysine isopeptide (Lys-Gly) (interchain with G-Cter in SUMO2) linkage. 4 C2H2-type zinc fingers span residues 718–740 (NKCKYCGKAFHNRSFLLIHERVH), 746–768 (YQCRECEKAFRWSSNLYRHQRKH), 796–818 (FWCQECGKTFTRKRSLLDHKGIH), and 824–846 (FKCNLCEKSFDRNYRLVNHQRIH). Residue lysine 929 forms a Glycyl lysine isopeptide (Lys-Gly) (interchain with G-Cter in SUMO2) linkage. C2H2-type zinc fingers lie at residues 933-955 (HKCSTCGKTFKKHSHLISHKRCH) and 961-983 (FKCIVCGKTFRWSSNLTRHMKNH).

It belongs to the krueppel C2H2-type zinc-finger protein family.

The protein resides in the nucleus. Its function is as follows. Transcription regulator required to maintain maternal and paternal gene imprinting, a process by which gene expression is restricted in a parent of origin-specific manner by epigenetic modification of genomic DNA and chromatin, including DNA methylation. Acts by controlling DNA methylation during the earliest multicellular stages of development at multiple imprinting control regions (ICRs). Acts together with ZFP57, but ZFP57 plays the predominant role in imprinting maintenance. In contrast, ZNF445 seems to be the major factor in human early embryonic imprinting maintenance. In Mus musculus (Mouse), this protein is Zinc finger protein 445 (Znf445).